The primary structure comprises 463 residues: Argininosuccinate lyase (463 aa).

The protein belongs to the lyase 1 family. Argininosuccinate lyase subfamily.

The protein localises to the cytoplasm. It catalyses the reaction 2-(N(omega)-L-arginino)succinate = fumarate + L-arginine. It functions in the pathway amino-acid biosynthesis; L-arginine biosynthesis; L-arginine from L-ornithine and carbamoyl phosphate: step 3/3. In Streptococcus pneumoniae (strain JJA), this protein is Argininosuccinate lyase.